We begin with the raw amino-acid sequence, 623 residues long: MPSVYGARLTTFEDEEKESEYGYVRKVSGPVVIADGMNGAAMYELVRVGHDNLIGEIIRLEGDSATIQVYEETAGLMVNDPVLRTHKPLSVELGPGILGNIFDGIQRPLKTIAIRSGDVYIPRGVSVPALDKDTLWEFQPKKIGEGDLLTGGDLYATVFENSLMQHHVALPPDAMGKVTYVAPAGQYSLKDTVLELEFQGVKKSFTMLQAWPVRTPRPVSSKLAADTPLLTGQRVLDALFPSVLGGTCAIPGAFGCGKTVISQALSKYSNSDTVVYVGCGERGNEMAEVLMDFPQLTMTLPDGREESVMKRTTLVANTSNMPVAAREASIYTGITIAEYFRDMGYNVSMMADSTSRWAEALREISGRLAEMPADSGYPAYLAARLASFYERAGKVKCLGGPERTGSVTIVGAVSPPGGDFSDPVTSATLSIVQVFWGLDKKLAQRKHFPSVNWLISYSKYSTALESFYEQFDPDFINIRTKAREVLQREDDLNEIVQLVGKDALAEGDKITLETAKLLREDYLAQNAFTPYDKFCPFYKSVWMMRNIIHFYNLANQAVEKGAGMDGQKITYTLIKHRLGDLFYRLVSQKFEDPAEGEPALVAKFKKLHEDLTAGFRALEDETR.

Position 252–259 (Gly252–Thr259) interacts with ATP.

This sequence belongs to the ATPase alpha/beta chains family. V-ATPase is a heteromultimeric enzyme composed of a peripheral catalytic V1 complex (main components: subunits A, B, C, D, E, and F) attached to an integral membrane V0 proton pore complex (main component: the proteolipid protein).

The enzyme catalyses ATP + H2O + 4 H(+)(in) = ADP + phosphate + 5 H(+)(out). Functionally, catalytic subunit of the peripheral V1 complex of vacuolar ATPase. V-ATPase vacuolar ATPase is responsible for acidifying a variety of intracellular compartments in eukaryotic cells. In Citrus unshiu (Satsuma mandarin), this protein is V-type proton ATPase catalytic subunit A.